Reading from the N-terminus, the 298-residue chain is Protease HtpX homolog (298 aa).

Helical transmembrane passes span 14-34 (VVLLVVFFALLALIGASAGYL) and 39-59 (YAMGLVLALVIGMIYATSMIF). Zn(2+) is bound at residue His-143. Residue Glu-144 is part of the active site. His-147 serves as a coordination point for Zn(2+). Transmembrane regions (helical) follow at residues 158–178 (IAVALASAVTVISSIGGRMLW) and 197–217 (IITLLLSLLSLLLAPLVASLI). Glu-226 provides a ligand contact to Zn(2+).

The protein belongs to the peptidase M48B family. Zn(2+) serves as cofactor.

It localises to the cell membrane. The protein is Protease HtpX homolog of Streptococcus pyogenes serotype M49 (strain NZ131).